An 858-amino-acid chain; its full sequence is M-phase phosphoprotein 8 (858 aa).

The interval 18–55 is disordered; it reads VPDSIGRSPESEGVGAGDEEKDAATKGTVAVGDSEEDG. Residues Ser51, Ser85, Ser136, and Ser138 each carry the phosphoserine modification. In terms of domain architecture, Chromo spans 59 to 118; it reads FEVERILDMKCEGGKNLYKVRWKGYTSEDDTWEPEVHLEDCKEVLLEFRKKLAENKAKAV. Residues 80–87 form a histone H3K9me3 binding region; that stretch reads WKGYTSED. A disordered region spans residues 129-175; it reads NDIFEADSDSDQQSDTKEDISPRKKKKKIKCKEETSPEDLRKKRTKM. Residue Thr144 is modified to Phosphothreonine. Residues Ser149 and Ser164 each carry the phosphoserine; by CDK1 modification. Basic and acidic residues predominate over residues 159 to 169; it reads CKEETSPEDLR. At Ser188 the chain carries Phosphoserine. Disordered regions lie at residues 209 to 234 and 250 to 300; these read ELKD…NKRA and NRKT…DKTA. Phosphoserine is present on residues Ser267, Ser271, and Ser278. Residues 273-282 are compositionally biased toward acidic residues; that stretch reads ILEDDSEDFI. Residues 283–300 are compositionally biased toward basic and acidic residues; the sequence is SDNREENQNVRSVRDKTA. At Ser318 the chain carries Phosphoserine. Residues 321-431 are disordered; it reads EDAGTRVRRK…YDLDKEEKAR (111 aa). The segment covering 335–357 has biased composition (basic and acidic residues); it reads RKFEEPKEIKKLESTNAFLERRA. Thr385 is modified (phosphothreonine; by CDK1). Phosphoserine is present on residues Ser392 and Ser400. Over residues 407-431 the composition is skewed to basic and acidic residues; sequence EKEKKNEPKGKYQKRYDLDKEEKAR. A Phosphothreonine modification is found at Thr453. 4 ANK repeats span residues 598–627, 631–660, 664–693, and 697–726; these read TGMT…KVNG, NGTT…FVNV, NGET…DCNI, and HQNS…TLSR.

Homodimer. Interacts (via chromo domain) with histone H3K9me3. Has the highest affinity for H3K9me3, and lesser affinity for H3K9me2 and H3K9me1. Component of the HUSH complex; at least composed of TASOR, PPHLN1 and MPHOSPH8. Interacts with DNMT3, EHMT1 and SETDB1. Interacts with MORC2; the interaction associateS MORC2 with the HUSH complex which recruits MORC2 to heterochromatic loci. Interacts with ZNF638; leading to recruitment of the HUSH complex to unintegrated retroviral DNA. Interacts with TASOR. In terms of processing, phosphorylated in M (mitotic) phase. Phosphorylation by CDK1 promotes dissociation from chromatin. In terms of tissue distribution, expressed in the spermatogonia, spermatocytes and granular cells within the cerebellum.

The protein localises to the nucleus. The protein resides in the chromosome. Its function is as follows. Heterochromatin component that specifically recognizes and binds methylated 'Lys-9' of histone H3 (H3K9me) and promotes recruitment of proteins that mediate epigenetic repression. Mediates recruitment of the HUSH complex to H3K9me3 sites: the HUSH complex is recruited to genomic loci rich in H3K9me3 and is required to maintain transcriptional silencing by promoting recruitment of SETDB1, a histone methyltransferase that mediates further deposition of H3K9me3, as well as MORC2. Binds H3K9me and promotes DNA methylation by recruiting DNMT3A to target CpG sites; these can be situated within the coding region of the gene. Mediates down-regulation of CDH1 expression. Also represses L1 retrotransposons in collaboration with MORC2 and, probably, SETDB1, the silencing is dependent of repressive epigenetic modifications, such as H3K9me3 mark. Silencing events often occur within introns of transcriptionally active genes, and lead to the down-regulation of host gene expression. The HUSH complex is also involved in the silencing of unintegrated retroviral DNA by being recruited by ZNF638: some part of the retroviral DNA formed immediately after infection remains unintegrated in the host genome and is transcriptionally repressed. The protein is M-phase phosphoprotein 8 of Mus musculus (Mouse).